Here is a 202-residue protein sequence, read N- to C-terminus: Pectinesterase inhibitor 11 (202 aa).

Positions 1-21 (MAKQIFYTLFLFLLSTAILTA) are cleaved as a signal peptide. A disulfide bond links Cys-43 and Cys-52. The N-linked (GlcNAc...) asparagine glycan is linked to Asn-76. Cys-109 and Cys-160 are oxidised to a cystine.

This sequence belongs to the PMEI family.

It is found in the secreted. The protein resides in the extracellular space. Its subcellular location is the apoplast. Functionally, pectin methylesterase (PME) inhibitor involved in the maintenance of cell wall integrity in response to necrotrophic pathogens. Modulates PME activity and pectin methylesterification during infection by Botrytis cinerea and contributes to resistance against the pathogen. The chain is Pectinesterase inhibitor 11 from Arabidopsis thaliana (Mouse-ear cress).